A 329-amino-acid chain; its full sequence is uncharacterized protein (329 aa).

One can recognise a Nudix hydrolase domain in the interval 27–185; it reads PRRASVAVII…IQIDSSRALK (159 aa). 3 helical membrane-spanning segments follow: residues 123-143, 227-247, and 303-323; these read VITSNWGQFPLLLLSSFVFIL, PFLRGITHSIFVDLFIFLSPS, and LTLLVGFLFRLFLVYLLFLII.

It is found in the membrane. This is an uncharacterized protein from Schizosaccharomyces pombe (strain 972 / ATCC 24843) (Fission yeast).